A 205-amino-acid polypeptide reads, in one-letter code: Disintegrin-like leberagin-C (205 aa).

A Disintegrin domain is found at 4 to 90; that stretch reads PPVCGNELLE…DCPIDRFHRN (87 aa). Disulfide bonds link Cys7–Cys26, Cys18–Cys36, Cys62–Cys82, Cys69–Cys94, Cys101–Cys106, Cys113–Cys128, Cys151–Cys158, Cys163–Cys171, and Cys193–Cys198. A D/ECD-tripeptide motif is present at residues 68–70; that stretch reads ECD. Asn120 is a glycosylation site (N-linked (GlcNAc...) asparagine).

This sequence belongs to the venom metalloproteinase (M12B) family. P-III subfamily. P-IIIb sub-subfamily. Monomer. As to expression, expressed by the venom gland.

The protein resides in the secreted. Inhibits platelet aggregation induced by thrombin and arachidonic acid with IC(50) of 40 and 50 nM respectively (in rabbit platetelet-rich plasma). It also inhibits the adhesion of melanoma tumor cells on fibrinogen and fibronectin, by interfering with the function of alpha-V/beta-3 (ITGAV/ITGB3) and, to a lesser extent, with alpha-V/beta-6 (ITGAV/ITGB6) and alpha-5/beta-1 (ITGA5/ITGB1) integrins. The chain is Disintegrin-like leberagin-C from Macrovipera lebetina transmediterranea (Blunt-nosed viper).